Here is a 229-residue protein sequence, read N- to C-terminus: Multiple organellar RNA editing factor 5, chloroplastic/mitochondrial (229 aa).

The N-terminal 57 residues, 1–57, are a transit peptide targeting the chloroplast and mitochondrion; the sequence is MAKTLARSTASRITKRLISTSGATTPSPSYILSRRSTPVFSHAVGFISSLNRFTTIR.

It belongs to the MORF family. In terms of assembly, homodimer and heterodimers with MORF8/RIP1, MORF3/RIP3, MORF6/RIP6, MORF7/RIP7 and MORF9/RIP9.

It is found in the mitochondrion. Its subcellular location is the plastid. The protein resides in the chloroplast. Involved in organellar RNA editing. Required for the processing of few RNA editing sites in mitochondria. In Arabidopsis thaliana (Mouse-ear cress), this protein is Multiple organellar RNA editing factor 5, chloroplastic/mitochondrial.